The primary structure comprises 334 residues: MSLQIDQIALHQLIKRDEQTLDVVLRDSLLATDQVVEDMMAELHRVYSAKSKAYGLFNEESELAEALRHQRKGDEDFLGFSRAATARLRDELAKYPFAEGGTVLFCQYRYLAVEYLLIAVLNSCNSMSVNDNLDLNTTHYLDIPHADIVARIDLTEWETNPESSRYLTFLKGRVGRKVSDFFMDFLAASEGMNAKVQNKGLLQAVDDYCESGELNKDERQAYRQQVYNYCNEQLQAGEEIEIKALSQALPTFGEQNFQQFSQEQEYELEESFPADRSTLRQLTKFAGSGGGLTINFDAMLFGERIFWDPATDTLTIKGTPPNLRDQLQRRSSGH.

This sequence belongs to the YejK family.

The protein localises to the cytoplasm. The protein resides in the nucleoid. This is Nucleoid-associated protein plu2870 from Photorhabdus laumondii subsp. laumondii (strain DSM 15139 / CIP 105565 / TT01) (Photorhabdus luminescens subsp. laumondii).